Here is a 103-residue protein sequence, read N- to C-terminus: Large ribosomal subunit protein bL21 (103 aa).

The protein belongs to the bacterial ribosomal protein bL21 family. In terms of assembly, part of the 50S ribosomal subunit. Contacts protein L20.

In terms of biological role, this protein binds to 23S rRNA in the presence of protein L20. The protein is Large ribosomal subunit protein bL21 of Amoebophilus asiaticus (strain 5a2).